Reading from the N-terminus, the 316-residue chain is 1-aminocyclopropane-1-carboxylate oxidase 4 (316 aa).

Positions 153–253 (PNFGTKVSNY…RMSLASFYNP (101 aa)) constitute a Fe2OG dioxygenase domain. Residues histidine 177, aspartate 179, and histidine 234 each coordinate Fe cation.

It belongs to the iron/ascorbate-dependent oxidoreductase family. Fe cation is required as a cofactor. As to expression, expressed in all of the floral organs examined apart from the sepals.

It carries out the reaction 1-aminocyclopropane-1-carboxylate + L-ascorbate + O2 = ethene + L-dehydroascorbate + hydrogen cyanide + CO2 + 2 H2O. It functions in the pathway alkene biosynthesis; ethylene biosynthesis via S-adenosyl-L-methionine; ethylene from S-adenosyl-L-methionine: step 2/2. In Solanum lycopersicum (Tomato), this protein is 1-aminocyclopropane-1-carboxylate oxidase 4 (ACO4).